The chain runs to 112 residues: Protein Churchill (112 aa).

Positions 2, 5, 30, 33, 59, 61, 64, 66, 71, 88, and 91 each coordinate Zn(2+).

The protein belongs to the Churchill family.

Its function is as follows. Transcriptional activator that mediates FGF signaling during neural development. Plays a role in the regulation of cell movement. Does not bind DNA by itself. This is Protein Churchill (Churc1) from Mus musculus (Mouse).